Consider the following 571-residue polypeptide: Proline--tRNA ligase (571 aa).

This sequence belongs to the class-II aminoacyl-tRNA synthetase family. ProS type 1 subfamily. In terms of assembly, homodimer.

The protein localises to the cytoplasm. The catalysed reaction is tRNA(Pro) + L-proline + ATP = L-prolyl-tRNA(Pro) + AMP + diphosphate. Functionally, catalyzes the attachment of proline to tRNA(Pro) in a two-step reaction: proline is first activated by ATP to form Pro-AMP and then transferred to the acceptor end of tRNA(Pro). As ProRS can inadvertently accommodate and process non-cognate amino acids such as alanine and cysteine, to avoid such errors it has two additional distinct editing activities against alanine. One activity is designated as 'pretransfer' editing and involves the tRNA(Pro)-independent hydrolysis of activated Ala-AMP. The other activity is designated 'posttransfer' editing and involves deacylation of mischarged Ala-tRNA(Pro). The misacylated Cys-tRNA(Pro) is not edited by ProRS. The polypeptide is Proline--tRNA ligase (Pseudomonas syringae pv. syringae (strain B728a)).